Reading from the N-terminus, the 436-residue chain is Protein 60A (436 aa).

A signal peptide spans 1–27 (MTASLVVLPSLWLILIIFTAPYTHCTQ). Positions 28–317 (SGIYIDNGKD…STLHQRKKSK (290 aa)) are excised as a propeptide. Residues Asn102, Asn114, Asn217, and Asn229 are each glycosylated (N-linked (GlcNAc...) asparagine). Positions 293 to 322 (IKSTSGHSTQKRTKRSTLHQRKKSKSEPVN) are disordered. Over residues 301–316 (TQKRTKRSTLHQRKKS) the composition is skewed to basic residues. Cystine bridges form between Cys335/Cys401, Cys364/Cys433, and Cys368/Cys435. Asn377 is a glycosylation site (N-linked (GlcNAc...) asparagine).

This sequence belongs to the TGF-beta family. As to quaternary structure, homodimer; disulfide-linked.

It is found in the secreted. This chain is Protein 60A (gbb), found in Drosophila virilis (Fruit fly).